Consider the following 225-residue polypeptide: C-reactive protein (225 aa).

The N-terminal stretch at 1 to 19 (MEKLLWCSLVMIGFSQAFA) is a signal peptide. Q20 bears the Pyrrolidone carboxylic acid mark. Positions 24–225 (SKTAFVFPKE…DVFIKPQLWP (202 aa)) constitute a Pentraxin (PTX) domain. Cysteines 55 and 116 form a disulfide. N80, E157, Q158, D159, and Q169 together coordinate Ca(2+).

Belongs to the pentraxin family. In terms of assembly, homopentamer. Pentraxin (or pentaxin) have a discoid arrangement of 5 non-covalently bound subunits. Interacts with FCN1; may regulate monocyte activation by FCN1. The cofactor is Ca(2+). In terms of tissue distribution, found in plasma.

It localises to the secreted. Its function is as follows. Displays several functions associated with host defense: it promotes agglutination, bacterial capsular swelling, phagocytosis and complement fixation through its calcium-dependent binding to phosphorylcholine. Can interact with DNA and histones and may scavenge nuclear material released from damaged circulating cells. This chain is C-reactive protein (CRP), found in Mesocricetus auratus (Golden hamster).